Consider the following 424-residue polypeptide: UPF0597 protein Sbal_3070 (424 aa).

Belongs to the UPF0597 family.

The protein is UPF0597 protein Sbal_3070 of Shewanella baltica (strain OS155 / ATCC BAA-1091).